We begin with the raw amino-acid sequence, 621 residues long: Amino-acid acetyltransferase, mitochondrial (621 aa).

Residues 1 to 77 constitute a mitochondrion transit peptide; that stretch reads MIPRAPPSTQ…RSYLASFGVQ (77 aa). Residues 213–233 are disordered; the sequence is PKPGSEEESEPGFSPPETHIY. Residues 424 to 600 enclose the N-acetyltransferase domain; that stretch reads LPIRVVRSVS…GSAGLSFIED (177 aa).

Belongs to the acetyltransferase family.

The protein localises to the mitochondrion. The catalysed reaction is L-glutamate + acetyl-CoA = N-acetyl-L-glutamate + CoA + H(+). The protein operates within amino-acid biosynthesis; L-arginine biosynthesis; N(2)-acetyl-L-ornithine from L-glutamate: step 1/4. N-acetylglutamate synthase involved in arginine biosynthesis. This Coprinopsis cinerea (strain Okayama-7 / 130 / ATCC MYA-4618 / FGSC 9003) (Inky cap fungus) protein is Amino-acid acetyltransferase, mitochondrial (ARG2).